A 487-amino-acid chain; its full sequence is Cobyric acid synthase (487 aa).

The GATase cobBQ-type domain occupies 249–435 (GIDIAIVRLP…IHGIFDEGDF (187 aa)). Residue Cys330 is the Nucleophile of the active site. His427 is an active-site residue.

Belongs to the CobB/CobQ family. CobQ subfamily.

It participates in cofactor biosynthesis; adenosylcobalamin biosynthesis. Its function is as follows. Catalyzes amidations at positions B, D, E, and G on adenosylcobyrinic A,C-diamide. NH(2) groups are provided by glutamine, and one molecule of ATP is hydrogenolyzed for each amidation. The chain is Cobyric acid synthase from Clostridium perfringens (strain ATCC 13124 / DSM 756 / JCM 1290 / NCIMB 6125 / NCTC 8237 / Type A).